The chain runs to 836 residues: Granulocyte colony-stimulating factor receptor (836 aa).

A signal peptide spans 1 to 24 (MARLGNCSLTWAALIILLLPGSLE). The Ig-like C2-type domain maps to 25 to 117 (ECGHISVSAP…SLQILDQVEL (93 aa)). The Extracellular portion of the chain corresponds to 25-627 (ECGHISVSAP…TLTPEGSELH (603 aa)). 2 cysteine pairs are disulfide-bonded: cysteine 26–cysteine 52 and cysteine 46–cysteine 101. 4 N-linked (GlcNAc...) asparagine glycosylation sites follow: asparagine 51, asparagine 93, asparagine 128, and asparagine 134. 5 Fibronectin type-III domains span residues 125-230 (IPHN…LEPP), 233-332 (RTMD…TTER), 334-430 (PTVR…SRGP), 431-528 (ALTR…MAPS), and 530-623 (APEL…TPEG). 5 cysteine pairs are disulfide-bonded: cysteine 131/cysteine 142, cysteine 167/cysteine 218, cysteine 177/cysteine 186, cysteine 248/cysteine 295, and cysteine 266/cysteine 309. The short motif at 318–322 (WSDWS) is the WSXWS motif element. Asparagine 389, asparagine 474, asparagine 579, and asparagine 610 each carry an N-linked (GlcNAc...) asparagine glycan. The helical transmembrane segment at 628–650 (IILGLFGLLLLLTCLCGTAWLCC) threads the bilayer. Topologically, residues 651-836 (SPNRKNPLWP…VHGMEALGSF (186 aa)) are cytoplasmic. Positions 658–666 (LWPSVPDPA) match the Box 1 motif motif.

It belongs to the type I cytokine receptor family. Type 2 subfamily. Homodimer. The dimeric receptor binds two CSF3 molecules. Interacts with CEACAM1; down-regulates the CSF3R-STAT3 pathway through recruitment of PTPN6 that dephosphorylates CSF3R. N-glycosylated. As to expression, one or several isoforms have been found in myelogenous leukemia cell line KG-1, leukemia U-937 cell line, in bone marrow cells, placenta, and peripheral blood granulocytes. Isoform GCSFR-2 is found only in leukemia U-937 cells. Isoform GCSFR-3 is highly expressed in placenta.

It is found in the secreted. The protein localises to the cell membrane. In terms of biological role, receptor for granulocyte colony-stimulating factor (CSF3), essential for granulocytic maturation. Plays a crucial role in the proliferation, differentiation and survival of cells along the neutrophilic lineage. In addition it may function in some adhesion or recognition events at the cell surface. The protein is Granulocyte colony-stimulating factor receptor (CSF3R) of Homo sapiens (Human).